Here is a 64-residue protein sequence, read N- to C-terminus: Antimicrobial peptide THP2 (64 aa).

An N-terminal signal peptide occupies residues 1-28; that stretch reads MRILYLLFSLLFLALQVSPGLSSPKRDM. Intrachain disulfides connect C31/C57, C36/C51, and C41/C58.

In terms of tissue distribution, expressed in circulating heterophil granulocytes and bone marrow (at protein level).

Its subcellular location is the secreted. In terms of biological role, antibacterial activity against the Gram-positive bacterium Staphylococcus aureus. Lacks antibacterial activity against the Gram-negative bacterium E.coli K-12. The protein is Antimicrobial peptide THP2 of Meleagris gallopavo (Wild turkey).